We begin with the raw amino-acid sequence, 513 residues long: Putative thymidine phosphorylase (513 aa).

Belongs to the thymidine/pyrimidine-nucleoside phosphorylase family. Type 2 subfamily.

The enzyme catalyses thymidine + phosphate = 2-deoxy-alpha-D-ribose 1-phosphate + thymine. The polypeptide is Putative thymidine phosphorylase (Rhodopseudomonas palustris (strain BisB18)).